We begin with the raw amino-acid sequence, 120 residues long: NAD(P)H-quinone oxidoreductase subunit 3, chloroplastic (120 aa).

3 helical membrane passes run 7 to 27 (YETF…AFLI), 64 to 84 (MFAL…PWAM), and 88 to 108 (ILGI…IVGS).

It belongs to the complex I subunit 3 family. NDH is composed of at least 16 different subunits, 5 of which are encoded in the nucleus.

Its subcellular location is the plastid. The protein localises to the chloroplast thylakoid membrane. It carries out the reaction a plastoquinone + NADH + (n+1) H(+)(in) = a plastoquinol + NAD(+) + n H(+)(out). The enzyme catalyses a plastoquinone + NADPH + (n+1) H(+)(in) = a plastoquinol + NADP(+) + n H(+)(out). Its function is as follows. NDH shuttles electrons from NAD(P)H:plastoquinone, via FMN and iron-sulfur (Fe-S) centers, to quinones in the photosynthetic chain and possibly in a chloroplast respiratory chain. The immediate electron acceptor for the enzyme in this species is believed to be plastoquinone. Couples the redox reaction to proton translocation, and thus conserves the redox energy in a proton gradient. This chain is NAD(P)H-quinone oxidoreductase subunit 3, chloroplastic, found in Cycas taitungensis (Prince sago).